We begin with the raw amino-acid sequence, 233 residues long: Ciliary microtubule inner protein 6 (233 aa).

Basic and acidic residues-rich tracts occupy residues 1-14 (MEGEEKQQQHKTED) and 21-33 (AERKVEIKNEKSP). Positions 1 to 45 (MEGEEKQQQHKTEDDGIACVAERKVEIKNEKSPGKSTQHPKPCVD) are disordered. Residues 127 to 159 (GIVPLTSLDVSGEHENNFVEYISFIHQYDARRT) form a mn region. The disordered stretch occupies residues 192–233 (LLNTLESGSSEQPQKTDKGNSSGDKVTSPGLCQQNSQELLET). Residues 195 to 233 (TLESGSSEQPQKTDKGNSSGDKVTSPGLCQQNSQELLET) are compositionally biased toward polar residues.

Its subcellular location is the cell projection. It localises to the cilium. The sequence is that of Ciliary microtubule inner protein 6 (Cimip6) from Mus musculus (Mouse).